The sequence spans 304 residues: Ornithine carbamoyltransferase (304 aa).

Residues 53 to 56, Gln-80, Arg-104, and 131 to 134 contribute to the carbamoyl phosphate site; these read STRT and HPCQ. Residues Asn-162, Asp-219, and 223-224 each bind L-ornithine; that span reads SM. Carbamoyl phosphate is bound by residues 259 to 260 and Arg-287; that span reads CL.

It belongs to the aspartate/ornithine carbamoyltransferase superfamily. OTCase family.

The protein resides in the cytoplasm. The enzyme catalyses carbamoyl phosphate + L-ornithine = L-citrulline + phosphate + H(+). The protein operates within amino-acid biosynthesis; L-arginine biosynthesis; L-arginine from L-ornithine and carbamoyl phosphate: step 1/3. Reversibly catalyzes the transfer of the carbamoyl group from carbamoyl phosphate (CP) to the N(epsilon) atom of ornithine (ORN) to produce L-citrulline. The sequence is that of Ornithine carbamoyltransferase from Nitrosococcus oceani (strain ATCC 19707 / BCRC 17464 / JCM 30415 / NCIMB 11848 / C-107).